The chain runs to 226 residues: Thiopurine S-methyltransferase (226 aa).

The S-adenosyl-L-methionine site is built by W16, M51, E72, and R131.

The protein belongs to the class I-like SAM-binding methyltransferase superfamily. TPMT family.

The protein resides in the cytoplasm. The enzyme catalyses S-adenosyl-L-methionine + a thiopurine = S-adenosyl-L-homocysteine + a thiopurine S-methylether.. In Francisella tularensis subsp. tularensis (strain SCHU S4 / Schu 4), this protein is Thiopurine S-methyltransferase.